The primary structure comprises 551 residues: Sialic acid-binding Ig-like lectin 5 (551 aa).

The signal sequence occupies residues 1–16 (MLPLLLLPLLWGGSLQ). Residues 17-441 (EKPVYELQVQ…LGTGVVPAAL (425 aa)) are Extracellular-facing. The Ig-like V-type domain maps to 19–136 (PVYELQVQKS…KYSYQQNKLN (118 aa)). Cystine bridges form between C36–C170, C41–C101, and C164–C213. N100 carries an N-linked (GlcNAc...) asparagine glycan. 3 residues coordinate N-acetylneuraminate: R119, K127, and S129. An Ig-like C2-type 1 domain is found at 146–229 (PDIHFLEPLE…AQVTTERTVQ (84 aa)). Residues 189–210 (DPETTRSSELTLTPRPEDHGTN) are disordered. N-linked (GlcNAc...) asparagine glycans are attached at residues N210, N231, and N253. One can recognise an Ig-like C2-type 2 domain in the interval 236–330 (PQTITIFRNG…GFLQIFLNLS (95 aa)). The cysteines at positions 269 and 314 are disulfide-linked. N328, N375, N384, and N393 each carry an N-linked (GlcNAc...) asparagine glycan. A helical transmembrane segment spans residues 442 to 462 (GGAGVMALLCICLCLIFFLIV). Residues 463-551 (KARRKQAAGR…TEYSEIKTSK (89 aa)) lie on the Cytoplasmic side of the membrane. A disordered region spans residues 469–551 (AAGRPEKMDD…TEYSEIKTSK (83 aa)). The short motif at 518–523 (LHYASL) is the ITIM motif element. The span at 528-537 (MKSREPKDQE) shows a compositional bias: basic and acidic residues. The short motif at 542–547 (TEYSEI) is the SLAM-like motif element.

This sequence belongs to the immunoglobulin superfamily. SIGLEC (sialic acid binding Ig-like lectin) family. As to expression, expressed by monocytic/myeloid lineage cells. Found at high levels in peripheral blood leukocytes, spleen, bone marrow and at lower levels in lymph node, lung, appendix, placenta, pancreas and thymus. Expressed by monocytes and neutrophils but absent from leukemic cell lines representing early stages of myelomonocytic differentiation.

Its subcellular location is the membrane. Its function is as follows. Putative adhesion molecule that mediates sialic-acid dependent binding to cells. Binds equally to alpha-2,3-linked and alpha-2,6-linked sialic acid. The sialic acid recognition site may be masked by cis interactions with sialic acids on the same cell surface. The chain is Sialic acid-binding Ig-like lectin 5 (SIGLEC5) from Homo sapiens (Human).